The sequence spans 388 residues: Cystathionine gamma-synthase (388 aa).

The interval 1 to 24 (MSEDRTGHQGISGPATRAIHAGYR) is disordered. Lys-208 carries the post-translational modification N6-(pyridoxal phosphate)lysine.

Belongs to the trans-sulfuration enzymes family. As to quaternary structure, homotetramer. Requires pyridoxal 5'-phosphate as cofactor.

The protein localises to the cytoplasm. It carries out the reaction O-succinyl-L-homoserine + L-cysteine = L,L-cystathionine + succinate + H(+). In terms of biological role, catalyzes the formation of L-cystathionine from O-succinyl-L-homoserine (OSHS) and L-cysteine, via a gamma-replacement reaction. In the absence of thiol, catalyzes gamma-elimination to form 2-oxobutanoate, succinate and ammonia. In Mycobacterium bovis (strain ATCC BAA-935 / AF2122/97), this protein is Cystathionine gamma-synthase (metB).